Here is a 343-residue protein sequence, read N- to C-terminus: tRNA N6-adenosine threonylcarbamoyltransferase (343 aa).

Positions 116 and 120 each coordinate Fe cation. Substrate-binding positions include 138–142, Asp172, Gly185, Asp189, and Asn277; that span reads LVSGG. Asp305 serves as a coordination point for Fe cation.

Belongs to the KAE1 / TsaD family. Fe(2+) serves as cofactor.

The protein resides in the cytoplasm. It catalyses the reaction L-threonylcarbamoyladenylate + adenosine(37) in tRNA = N(6)-L-threonylcarbamoyladenosine(37) in tRNA + AMP + H(+). Required for the formation of a threonylcarbamoyl group on adenosine at position 37 (t(6)A37) in tRNAs that read codons beginning with adenine. Is involved in the transfer of the threonylcarbamoyl moiety of threonylcarbamoyl-AMP (TC-AMP) to the N6 group of A37, together with TsaE and TsaB. TsaD likely plays a direct catalytic role in this reaction. The protein is tRNA N6-adenosine threonylcarbamoyltransferase of Mycobacterium ulcerans (strain Agy99).